The primary structure comprises 712 residues: NURS complex subunit red1 (712 aa).

Over residues 1 to 22 (MSRSINLDELRKKALESKKKNE) the composition is skewed to basic and acidic residues. Disordered stretches follow at residues 1–71 (MSRS…DRFP), 107–195 (NKTF…TTNQ), and 323–348 (DDFS…GLTM). The stretch at 5–32 (INLDELRKKALESKKKNEEDESNDSDKE) forms a coiled coil. Over residues 23–42 (EDESNDSDKEDGEISEDDPV) the composition is skewed to acidic residues. Residues 130-141 (SETSDSSNTSQS) are compositionally biased toward low complexity. Composition is skewed to polar residues over residues 178–193 (FLST…SKTT) and 327–348 (NSKI…GLTM). Positions 351–379 (SDYLALLRNKEEEIRRMTKLILRLESNKK) form a coiled coil. The segment at 428–447 (PSISSSGASSSAATTNSDTT) is disordered. A coiled-coil region spans residues 471 to 501 (AQIKKSEIDILNNLIEKEEGELTKYQTLVKS). Polar residues predominate over residues 545-567 (QADENSSQILSSKTSNAPNGTTE). The disordered stretch occupies residues 545–568 (QADENSSQILSSKTSNAPNGTTET). The segment at 618–639 (FCKYETTGGVCNDDHCEASHFR) adopts a C3H1-type zinc-finger fold.

In terms of assembly, interacts with mmi1, pla1 and rrp6.

The protein localises to the nucleus. Functionally, promotes the exosome-mediated degradation of mRNAs containing a DSR (determinant of selective removal) signal sequence from mitotic cells. This is NURS complex subunit red1 from Schizosaccharomyces pombe (strain 972 / ATCC 24843) (Fission yeast).